The following is a 517-amino-acid chain: Crotonobetaine/carnitine--CoA ligase (517 aa).

It belongs to the ATP-dependent AMP-binding enzyme family.

The catalysed reaction is 4-(trimethylamino)butanoate + ATP + CoA = 4-(trimethylamino)butanoyl-CoA + AMP + diphosphate. It carries out the reaction crotonobetaine + ATP + CoA = crotonobetainyl-CoA + AMP + diphosphate. It catalyses the reaction (R)-carnitine + ATP + CoA = (R)-carnitinyl-CoA + AMP + diphosphate. It functions in the pathway amine and polyamine metabolism; carnitine metabolism. Catalyzes the transfer of CoA to carnitine, generating the initial carnitinyl-CoA needed for the CaiB reaction cycle. Also has activity toward crotonobetaine and gamma-butyrobetaine. In Salmonella enteritidis PT4 (strain P125109), this protein is Crotonobetaine/carnitine--CoA ligase.